The chain runs to 366 residues: Alanine racemase (366 aa).

Lysine 40 serves as the catalytic Proton acceptor; specific for D-alanine. Lysine 40 bears the N6-(pyridoxal phosphate)lysine mark. Position 136 (arginine 136) interacts with substrate. Residue tyrosine 263 is the Proton acceptor; specific for L-alanine of the active site. A substrate-binding site is contributed by methionine 310.

Belongs to the alanine racemase family. The cofactor is pyridoxal 5'-phosphate.

It carries out the reaction L-alanine = D-alanine. The protein operates within amino-acid biosynthesis; D-alanine biosynthesis; D-alanine from L-alanine: step 1/1. Its function is as follows. Catalyzes the interconversion of L-alanine and D-alanine. May also act on other amino acids. The protein is Alanine racemase (alr) of Streptococcus pyogenes serotype M1.